We begin with the raw amino-acid sequence, 278 residues long: MSVTPDPTVGQALHPFSVPPTPAELDHIAAFYNVHPTPPLIGFSLIGSVNIRPGGTSQRLTGIFDATPNSLPDAVASLSAHNFHHLLDWHHSIDPAHIAAAPHPHTPAIKAALQRLTLIPNVIIYAPPTPSPPPPPAPTQPTRPTPGPAFFPQPFKVELHHPTPKTSSLPAPSLPTSLPPIITNQYLRLQISTPTGARQTYLRALIPKSPDLTDFILRIDLTEYHAHLIFTAELTRDHSITLARGPYVWPTFLPPSINNLIKLTHAAAEPSLQLTEIS.

Pro residues predominate over residues 127–151 (PPTPSPPPPPAPTQPTRPTPGPAFF). A disordered region spans residues 127-174 (PPTPSPPPPPAPTQPTRPTPGPAFFPQPFKVELHHPTPKTSSLPAPSL). A compositionally biased stretch (low complexity) spans 164–174 (PKTSSLPAPSL).

This is an uncharacterized protein from Botryotinia fuckeliana (Noble rot fungus).